The chain runs to 79 residues: Small ribosomal subunit protein bS18 (79 aa).

This sequence belongs to the bacterial ribosomal protein bS18 family. In terms of assembly, part of the 30S ribosomal subunit. Forms a tight heterodimer with protein bS6.

Functionally, binds as a heterodimer with protein bS6 to the central domain of the 16S rRNA, where it helps stabilize the platform of the 30S subunit. This is Small ribosomal subunit protein bS18 from Bacillus pumilus (strain SAFR-032).